The sequence spans 447 residues: Cobyrinate a,c-diamide synthase (447 aa).

Residues 247-435 (RIGVAIDEAF…IHIHAASCPQ (189 aa)) form the GATase cobBQ-type domain. Catalysis depends on cysteine 329, which acts as the Nucleophile.

Belongs to the CobB/CbiA family. Requires Mg(2+) as cofactor.

It catalyses the reaction cob(II)yrinate + 2 L-glutamine + 2 ATP + 2 H2O = cob(II)yrinate a,c diamide + 2 L-glutamate + 2 ADP + 2 phosphate + 2 H(+). The catalysed reaction is Ni-sirohydrochlorin + 2 L-glutamine + 2 ATP + 2 H2O = Ni-sirohydrochlorin a,c-diamide + 2 L-glutamate + 2 ADP + 2 phosphate + 2 H(+). It functions in the pathway cofactor biosynthesis; adenosylcobalamin biosynthesis; cob(II)yrinate a,c-diamide from sirohydrochlorin (anaerobic route): step 10/10. Functionally, catalyzes the ATP-dependent amidation of the two carboxylate groups at positions a and c of cobyrinate, using either L-glutamine or ammonia as the nitrogen source. Involved in the biosynthesis of the unique nickel-containing tetrapyrrole coenzyme F430, the prosthetic group of methyl-coenzyme M reductase (MCR), which plays a key role in methanogenesis and anaerobic methane oxidation. Catalyzes the ATP-dependent amidation of the two carboxylate groups at positions a and c of Ni-sirohydrochlorin, using L-glutamine or ammonia as the nitrogen source. This chain is Cobyrinate a,c-diamide synthase, found in Methanothermobacter thermautotrophicus (strain ATCC 29096 / DSM 1053 / JCM 10044 / NBRC 100330 / Delta H) (Methanobacterium thermoautotrophicum).